Here is a 293-residue protein sequence, read N- to C-terminus: MEIIEGKMPFMGYETHYRIVGRRSEKSPLVLLHGGPGSTHNYFEVLDKLAKIDDRRIIMYDQLGCGNSSIPDDHPELYTKETWVKELKTLREHLALRKIHLLGQSWGGMLAIIYMCDYHPEGIQSLILSSTLSSASLWSKELHRMIKYLPIEEQAAIHRAELTDTFTEPDYLKANEHFMNQHAIDMKKKWPECVMREKKGGTVAYETAWGPNEYTPEGNLHDYEYTDQLSKIKVPTLITSGTDDLCTPYVAKTMHDHIAGSQWKLFENCSHMSFVQKTDEYIAMLKKWLDAND.

The AB hydrolase-1 domain occupies 28–277; the sequence is PLVLLHGGPG…NCSHMSFVQK (250 aa). The active-site Nucleophile is Ser-105. Asp-244 is an active-site residue. Residue His-271 is the Proton donor of the active site.

Belongs to the peptidase S33 family.

The protein resides in the cell envelope. The catalysed reaction is Release of N-terminal proline from a peptide.. Functionally, releases the N-terminal proline from various substrates. This chain is Proline iminopeptidase, found in Lactobacillus acidophilus (strain ATCC 700396 / NCK56 / N2 / NCFM).